The following is a 352-amino-acid chain: Homeobox protein Mohawk (352 aa).

Residues 19–53 form a disordered region; that stretch reads GASERERGGRPYSGVLDSPHARPEVGIADGPPLKD. The homeobox; TALE-type DNA-binding region spans 71-132; that stretch reads VRHKRQALQD…NARRRLKNTV (62 aa). Disordered stretches follow at residues 157–194 and 245–272; these read LSVS…IKSE and TRQR…SETE.

The protein belongs to the TALE/IRO homeobox family.

It localises to the nucleus. Functionally, may act as a morphogenetic regulator of cell adhesion. The chain is Homeobox protein Mohawk (MKX) from Pongo abelii (Sumatran orangutan).